The chain runs to 566 residues: Oxygen-dependent choline dehydrogenase (566 aa).

Position 7-36 (7-36 (DYIICGAGSAGNVLATRLTEDPNVTVLLLE)) interacts with FAD. The disordered stretch occupies residues 183 to 203 (QQEGFGPMDRTVTPKGRRAST). His-474 acts as the Proton acceptor in catalysis.

The protein belongs to the GMC oxidoreductase family. It depends on FAD as a cofactor.

The catalysed reaction is choline + A = betaine aldehyde + AH2. It catalyses the reaction betaine aldehyde + NAD(+) + H2O = glycine betaine + NADH + 2 H(+). It functions in the pathway amine and polyamine biosynthesis; betaine biosynthesis via choline pathway; betaine aldehyde from choline (cytochrome c reductase route): step 1/1. Involved in the biosynthesis of the osmoprotectant glycine betaine. Catalyzes the oxidation of choline to betaine aldehyde and betaine aldehyde to glycine betaine at the same rate. The protein is Oxygen-dependent choline dehydrogenase of Burkholderia ambifaria (strain ATCC BAA-244 / DSM 16087 / CCUG 44356 / LMG 19182 / AMMD) (Burkholderia cepacia (strain AMMD)).